The following is a 388-amino-acid chain: ATP phosphoribosyltransferase regulatory subunit (388 aa).

Belongs to the class-II aminoacyl-tRNA synthetase family. HisZ subfamily. Heteromultimer composed of HisG and HisZ subunits.

The protein localises to the cytoplasm. The protein operates within amino-acid biosynthesis; L-histidine biosynthesis; L-histidine from 5-phospho-alpha-D-ribose 1-diphosphate: step 1/9. Its function is as follows. Required for the first step of histidine biosynthesis. May allow the feedback regulation of ATP phosphoribosyltransferase activity by histidine. The protein is ATP phosphoribosyltransferase regulatory subunit of Acinetobacter baumannii (strain SDF).